We begin with the raw amino-acid sequence, 183 residues long: Peptide deformylase (183 aa).

2 residues coordinate Fe cation: Cys-111 and His-154. Glu-155 is an active-site residue. Residue His-158 coordinates Fe cation.

The protein belongs to the polypeptide deformylase family. The cofactor is Fe(2+).

It carries out the reaction N-terminal N-formyl-L-methionyl-[peptide] + H2O = N-terminal L-methionyl-[peptide] + formate. Its function is as follows. Removes the formyl group from the N-terminal Met of newly synthesized proteins. Requires at least a dipeptide for an efficient rate of reaction. N-terminal L-methionine is a prerequisite for activity but the enzyme has broad specificity at other positions. This chain is Peptide deformylase, found in Staphylococcus epidermidis (strain ATCC 35984 / DSM 28319 / BCRC 17069 / CCUG 31568 / BM 3577 / RP62A).